The following is a 379-amino-acid chain: L-lactate dehydrogenase (379 aa).

Residues 1-379 (MIISSSTDYR…ISPDSLVRGL (379 aa)) enclose the FMN hydroxy acid dehydrogenase domain. Tyrosine 24 provides a ligand contact to substrate. Serine 106 and glutamine 127 together coordinate FMN. Residue tyrosine 129 participates in substrate binding. Threonine 155 serves as a coordination point for FMN. Position 164 (arginine 164) interacts with substrate. Lysine 251 serves as a coordination point for FMN. Catalysis depends on histidine 275, which acts as the Proton acceptor. Arginine 278 lines the substrate pocket. FMN is bound at residue 306–330 (DSGIRSGLDVVRMIAQGADGVLIGR).

It belongs to the FMN-dependent alpha-hydroxy acid dehydrogenase family. The cofactor is FMN.

Its subcellular location is the cell inner membrane. It catalyses the reaction (S)-lactate + A = pyruvate + AH2. Catalyzes the conversion of L-lactate to pyruvate. Is coupled to the respiratory chain. This is L-lactate dehydrogenase from Allorhizobium ampelinum (strain ATCC BAA-846 / DSM 112012 / S4) (Agrobacterium vitis (strain S4)).